A 1435-amino-acid polypeptide reads, in one-letter code: DNA polymerase III PolC-type (1435 aa).

One can recognise an Exonuclease domain in the interval 420-576 (YVVFDVETTG…YDTEATGYLL (157 aa)).

This sequence belongs to the DNA polymerase type-C family. PolC subfamily.

Its subcellular location is the cytoplasm. It catalyses the reaction DNA(n) + a 2'-deoxyribonucleoside 5'-triphosphate = DNA(n+1) + diphosphate. In terms of biological role, required for replicative DNA synthesis. This DNA polymerase also exhibits 3' to 5' exonuclease activity. This chain is DNA polymerase III PolC-type, found in Bacillus cereus (strain ATCC 14579 / DSM 31 / CCUG 7414 / JCM 2152 / NBRC 15305 / NCIMB 9373 / NCTC 2599 / NRRL B-3711).